The following is a 140-amino-acid chain: MYHGHAKRRFGRTHEHRKAMFANMSQALIKHEQIVTTLPKAKDLRPIVEKLVTLGKRGDLHARRQAIAQIKDVALVGKLFEVLGPRYKDRHGGYLRVLKAGFRYGDNAPMAVIEFVDRDVTAKGKDSGPVLNAAGEEEAA.

This sequence belongs to the bacterial ribosomal protein bL17 family. As to quaternary structure, part of the 50S ribosomal subunit. Contacts protein L32.

The chain is Large ribosomal subunit protein bL17 from Beijerinckia indica subsp. indica (strain ATCC 9039 / DSM 1715 / NCIMB 8712).